The following is an 892-amino-acid chain: Translation initiation factor IF-2 (892 aa).

Residues 138–185 show a composition bias toward basic and acidic residues; sequence QRNLAEQQRLAEVDRQRVEEQERKRREEEQAELERQKTESRVVEEILV. 2 disordered regions span residues 138 to 250 and 262 to 298; these read QRNL…EDDS and AAERARRGSNTRGKGGGSHRSATHRGNENSIRSSGAH. Positions 207-219 are enriched in low complexity; the sequence is LPRTVRPTPAARP. In terms of domain architecture, tr-type G spans 391-560; the sequence is PRPPVVTIMG…SIQAEVLELK (170 aa). GTP contacts are provided by residues 400–407, 446–450, and 500–503; these read GHVDHGKT, DTPGH, and SKID.

This sequence belongs to the TRAFAC class translation factor GTPase superfamily. Classic translation factor GTPase family. IF-2 subfamily.

The protein localises to the cytoplasm. Its function is as follows. One of the essential components for the initiation of protein synthesis. Protects formylmethionyl-tRNA from spontaneous hydrolysis and promotes its binding to the 30S ribosomal subunits. Also involved in the hydrolysis of GTP during the formation of the 70S ribosomal complex. This Xylella fastidiosa (strain Temecula1 / ATCC 700964) protein is Translation initiation factor IF-2.